The primary structure comprises 314 residues: 4-hydroxy-3-methylbut-2-enyl diphosphate reductase (314 aa).

Residue Cys-12 coordinates [4Fe-4S] cluster. Positions 41 and 74 each coordinate (2E)-4-hydroxy-3-methylbut-2-enyl diphosphate. 2 residues coordinate dimethylallyl diphosphate: His-41 and His-74. Isopentenyl diphosphate-binding residues include His-41 and His-74. Residue Cys-96 participates in [4Fe-4S] cluster binding. (2E)-4-hydroxy-3-methylbut-2-enyl diphosphate is bound at residue His-124. His-124 contributes to the dimethylallyl diphosphate binding site. His-124 is a binding site for isopentenyl diphosphate. Catalysis depends on Glu-126, which acts as the Proton donor. Thr-168 provides a ligand contact to (2E)-4-hydroxy-3-methylbut-2-enyl diphosphate. A [4Fe-4S] cluster-binding site is contributed by Cys-198. The (2E)-4-hydroxy-3-methylbut-2-enyl diphosphate site is built by Ser-226, Ser-227, Asn-228, and Ser-270. Dimethylallyl diphosphate is bound by residues Ser-226, Ser-227, Asn-228, and Ser-270. Residues Ser-226, Ser-227, Asn-228, and Ser-270 each coordinate isopentenyl diphosphate.

Belongs to the IspH family. [4Fe-4S] cluster serves as cofactor.

The catalysed reaction is isopentenyl diphosphate + 2 oxidized [2Fe-2S]-[ferredoxin] + H2O = (2E)-4-hydroxy-3-methylbut-2-enyl diphosphate + 2 reduced [2Fe-2S]-[ferredoxin] + 2 H(+). It carries out the reaction dimethylallyl diphosphate + 2 oxidized [2Fe-2S]-[ferredoxin] + H2O = (2E)-4-hydroxy-3-methylbut-2-enyl diphosphate + 2 reduced [2Fe-2S]-[ferredoxin] + 2 H(+). It participates in isoprenoid biosynthesis; dimethylallyl diphosphate biosynthesis; dimethylallyl diphosphate from (2E)-4-hydroxy-3-methylbutenyl diphosphate: step 1/1. Its pathway is isoprenoid biosynthesis; isopentenyl diphosphate biosynthesis via DXP pathway; isopentenyl diphosphate from 1-deoxy-D-xylulose 5-phosphate: step 6/6. Its function is as follows. Catalyzes the conversion of 1-hydroxy-2-methyl-2-(E)-butenyl 4-diphosphate (HMBPP) into a mixture of isopentenyl diphosphate (IPP) and dimethylallyl diphosphate (DMAPP). Acts in the terminal step of the DOXP/MEP pathway for isoprenoid precursor biosynthesis. This is 4-hydroxy-3-methylbut-2-enyl diphosphate reductase from Pseudomonas aeruginosa (strain LESB58).